The following is a 212-amino-acid chain: Peptide methionine sulfoxide reductase MsrA (212 aa).

The active site involves Cys51.

Belongs to the MsrA Met sulfoxide reductase family.

The enzyme catalyses L-methionyl-[protein] + [thioredoxin]-disulfide + H2O = L-methionyl-(S)-S-oxide-[protein] + [thioredoxin]-dithiol. It catalyses the reaction [thioredoxin]-disulfide + L-methionine + H2O = L-methionine (S)-S-oxide + [thioredoxin]-dithiol. Has an important function as a repair enzyme for proteins that have been inactivated by oxidation. Catalyzes the reversible oxidation-reduction of methionine sulfoxide in proteins to methionine. The polypeptide is Peptide methionine sulfoxide reductase MsrA (Vibrio parahaemolyticus serotype O3:K6 (strain RIMD 2210633)).